The primary structure comprises 581 residues: Phosphoinositide phospholipase C 2 (581 aa).

An EF-hand-like domain is found at 26–102 (EIKTIFEKYS…NPPLALHKVH (77 aa)). Residues 103 to 248 (HDMDAPISHY…LKRRIIISTK (146 aa)) form the PI-PLC X-box domain. Residues His-118 and His-164 contribute to the active site. The interval 279–314 (PSFIQRNKSEAKDDLDGNDDDDDDDDEDKSKINAPP) is disordered. The span at 294–305 (DGNDDDDDDDDE) shows a compositional bias: acidic residues. The PI-PLC Y-box domain occupies 317-433 (KHLIAIHAGK…GYIKKPDLLL (117 aa)). A C2 domain is found at 434 to 563 (KSGSDSDIFD…EGIRAFPLHS (130 aa)).

Ca(2+) is required as a cofactor. Post-translationally, phosphorylation level varies significantly during early response to bacterial elicitor. As to expression, expressed in roots, shoots, leaves and flowers.

The protein localises to the cell membrane. It catalyses the reaction a 1,2-diacyl-sn-glycero-3-phospho-(1D-myo-inositol-4,5-bisphosphate) + H2O = 1D-myo-inositol 1,4,5-trisphosphate + a 1,2-diacyl-sn-glycerol + H(+). Its function is as follows. The production of the second messenger molecules diacylglycerol (DAG) and inositol 1,4,5-trisphosphate (IP3) is mediated by activated phosphatidylinositol-specific phospholipase C enzymes. At physiological calcium concentration, the preferred substrate is phosphatidylinositol 4,5-bisphosphate versus phosphatidylinositol. The chain is Phosphoinositide phospholipase C 2 (PLC2) from Arabidopsis thaliana (Mouse-ear cress).